The primary structure comprises 237 residues: 1-(5-phosphoribosyl)-5-[(5-phosphoribosylamino)methylideneamino] imidazole-4-carboxamide isomerase (237 aa).

Residue D8 is the Proton acceptor of the active site. D129 functions as the Proton donor in the catalytic mechanism.

This sequence belongs to the HisA/HisF family.

Its subcellular location is the cytoplasm. The catalysed reaction is 1-(5-phospho-beta-D-ribosyl)-5-[(5-phospho-beta-D-ribosylamino)methylideneamino]imidazole-4-carboxamide = 5-[(5-phospho-1-deoxy-D-ribulos-1-ylimino)methylamino]-1-(5-phospho-beta-D-ribosyl)imidazole-4-carboxamide. It participates in amino-acid biosynthesis; L-histidine biosynthesis; L-histidine from 5-phospho-alpha-D-ribose 1-diphosphate: step 4/9. The sequence is that of 1-(5-phosphoribosyl)-5-[(5-phosphoribosylamino)methylideneamino] imidazole-4-carboxamide isomerase from Alkaliphilus metalliredigens (strain QYMF).